Reading from the N-terminus, the 127-residue chain is Fluoride-specific ion channel FluC (127 aa).

4 consecutive transmembrane segments (helical) span residues 4–24 (LLLAVFIGGGTGSVARWLLSM), 35–55 (LGTLAANLIGAFIIGMGFAWF), 71–91 (TGFCGGLTTFSTFSAEVVFLL), and 103–123 (VFVNLLGSFAMTALAFWLFSA). Gly75 and Thr78 together coordinate Na(+).

The protein belongs to the fluoride channel Fluc/FEX (TC 1.A.43) family.

The protein localises to the cell inner membrane. The enzyme catalyses fluoride(in) = fluoride(out). With respect to regulation, na(+) is not transported, but it plays an essential structural role and its presence is essential for fluoride channel function. In terms of biological role, fluoride-specific ion channel. Important for reducing fluoride concentration in the cell, thus reducing its toxicity. The sequence is that of Fluoride-specific ion channel FluC from Escherichia coli O81 (strain ED1a).